A 582-amino-acid polypeptide reads, in one-letter code: uncharacterized protein (582 aa).

The next 6 helical transmembrane spans lie at 17-37 (VAML…LPTV), 57-77 (LGAV…GAVY), 131-151 (MTAT…IMAI), 156-176 (ALTW…YWII), 239-259 (ALML…LIWF), and 271-291 (VGSL…VLMA). The ABC transmembrane type-1 domain occupies 17–300 (VAMLMMLQLV…ATMTLAVLPR (284 aa)). One can recognise an ABC transporter domain in the interval 335-571 (VRLAGATFTY…CPTYAEFAAS (237 aa)). 369–376 (GSTGSGKS) lines the ATP pocket.

The protein belongs to the ABC transporter superfamily.

Its subcellular location is the cell membrane. This is an uncharacterized protein from Mycobacterium tuberculosis (strain CDC 1551 / Oshkosh).